The following is a 103-amino-acid chain: Large ribosomal subunit protein eL14 (103 aa).

This sequence belongs to the eukaryotic ribosomal protein eL14 family.

The protein is Large ribosomal subunit protein eL14 of Pyrobaculum calidifontis (strain DSM 21063 / JCM 11548 / VA1).